The following is a 602-amino-acid chain: Adenylosuccinate synthetase (602 aa).

GTP contacts are provided by residues 74–80 (GDEGKGK) and 104–106 (GHT). Aspartate 75 acts as the Proton acceptor in catalysis. Mg(2+)-binding residues include aspartate 75 and glycine 104. IMP contacts are provided by residues 75–78 (DEGK), 102–105 (NAGH), threonine 189, lysine 203, glutamine 315, threonine 331, and lysine 459. The active-site Proton donor is histidine 105. A substrate-binding site is contributed by 455 to 461 (AVTKKPR). GTP is bound by residues arginine 461 and 589-591 (GNG).

The protein belongs to the adenylosuccinate synthetase family. In terms of assembly, homodimer. It depends on Mg(2+) as a cofactor.

Its subcellular location is the cytoplasm. The enzyme catalyses IMP + L-aspartate + GTP = N(6)-(1,2-dicarboxyethyl)-AMP + GDP + phosphate + 2 H(+). Its pathway is purine metabolism; AMP biosynthesis via de novo pathway; AMP from IMP: step 1/2. In terms of biological role, plays an important role in the salvage pathway for purine nucleotide biosynthesis. Catalyzes the first committed step in the biosynthesis of AMP from IMP. This chain is Adenylosuccinate synthetase, found in Trypanosoma brucei brucei (strain 927/4 GUTat10.1).